Here is a 433-residue protein sequence, read N- to C-terminus: Enolase (433 aa).

Position 167 (Q167) interacts with (2R)-2-phosphoglycerate. The Proton donor role is filled by E209. Positions 246, 291, and 318 each coordinate Mg(2+). (2R)-2-phosphoglycerate-binding residues include K343, R372, S373, and K394. K343 (proton acceptor) is an active-site residue.

The protein belongs to the enolase family. In terms of assembly, component of the RNA degradosome, a multiprotein complex involved in RNA processing and mRNA degradation. Requires Mg(2+) as cofactor.

It is found in the cytoplasm. The protein resides in the secreted. The protein localises to the cell surface. The enzyme catalyses (2R)-2-phosphoglycerate = phosphoenolpyruvate + H2O. It functions in the pathway carbohydrate degradation; glycolysis; pyruvate from D-glyceraldehyde 3-phosphate: step 4/5. In terms of biological role, catalyzes the reversible conversion of 2-phosphoglycerate (2-PG) into phosphoenolpyruvate (PEP). It is essential for the degradation of carbohydrates via glycolysis. The sequence is that of Enolase from Aeromonas salmonicida (strain A449).